The primary structure comprises 385 residues: Cytochrome b (385 aa).

Over 1 to 27 the chain is Mitochondrial matrix; sequence MAFRKSNVYLSLVNSYIIDSPQPSSIN. Y16 provides a ligand contact to a ubiquinone. The helical transmembrane segment at 28–51 threads the bilayer; the sequence is YWWNMGSLLGLCLVIQIVTGIFMA. The Mitochondrial intermembrane segment spans residues 52-74; it reads MHYSSNIELAFSSVEHIMRDVHN. A helical membrane pass occupies residues 75–102; it reads GYILRYLHANGASFFFMVMFMHMAKGLY. Residues H82 and H96 each contribute to the heme b site. Topologically, residues 103–110 are mitochondrial matrix; it reads YGSYRSPR. The helical transmembrane segment at 111–135 threads the bilayer; sequence VTLWNVGVIIFILTIATAFLGYCCV. Residues 136 to 172 lie on the Mitochondrial intermembrane side of the membrane; that stretch reads YGQMSHWGATVITNLFSAIPFVGNDIVSWLWGGFSVS. The chain crosses the membrane as a helical span at residues 173–204; it reads NPTIQRFFALHYLVPFIIAAMVIMHLMALHIH. Positions 183 and 197 each coordinate heme b. A ubiquinone is bound at residue H202. The Mitochondrial matrix segment spans residues 205–223; the sequence is GSSNPLGITGNLDRIPMHS. Residues 224–246 traverse the membrane as a helical segment; the sequence is YFIFKDLVTVFLFMLILALFVFY. The Mitochondrial intermembrane portion of the chain corresponds to 247–287; that stretch reads SPNTLGHPDNYIPGNPLVTPASIVPEWYLLPFYAILRSIPD. A helical membrane pass occupies residues 288–308; sequence KLLGVITMFAAILVLLVLPFT. The Mitochondrial matrix portion of the chain corresponds to 309-319; the sequence is DRSVVRGNTFK. A helical membrane pass occupies residues 320-340; sequence VLSKFFFFIFVFNFVLLGQIG. Over 341–347 the chain is Mitochondrial intermembrane; sequence ACHVEVP. The chain crosses the membrane as a helical span at residues 348–364; it reads YVLMGQIATFIYFAYFL. At 365-385 the chain is on the mitochondrial matrix side; sequence IIVPVISTIENVLFYIGRVNK.

Belongs to the cytochrome b family. In terms of assembly, component of the ubiquinol-cytochrome c oxidoreductase (cytochrome b-c1 complex, complex III, CIII), a multisubunit enzyme composed of 10 subunits. The complex is composed of 3 respiratory subunits cytochrome b (COB), cytochrome c1 (CYT1) and Rieske protein (RIP1), 2 core protein subunits COR1 and QCR2, and 5 low-molecular weight protein subunits QCR6, QCR7, QCR8, QCR9 and QCR10. The complex exists as an obligatory dimer and forms supercomplexes (SCs) in the inner mitochondrial membrane with a monomer or a dimer of cytochrome c oxidase (complex IV, CIV), resulting in 2 different assemblies (supercomplexes III(2)IV and III(2)IV(2)). Heme b is required as a cofactor.

It localises to the mitochondrion inner membrane. It catalyses the reaction a quinol + 2 Fe(III)-[cytochrome c](out) = a quinone + 2 Fe(II)-[cytochrome c](out) + 2 H(+)(out). Functionally, component of the ubiquinol-cytochrome c oxidoreductase, a multisubunit transmembrane complex that is part of the mitochondrial electron transport chain which drives oxidative phosphorylation. The respiratory chain contains 3 multisubunit complexes succinate dehydrogenase (complex II, CII), ubiquinol-cytochrome c oxidoreductase (cytochrome b-c1 complex, complex III, CIII) and cytochrome c oxidase (complex IV, CIV), that cooperate to transfer electrons derived from NADH and succinate to molecular oxygen, creating an electrochemical gradient over the inner membrane that drives transmembrane transport and the ATP synthase. The cytochrome b-c1 complex catalyzes electron transfer from ubiquinol to cytochrome c, linking this redox reaction to translocation of protons across the mitochondrial inner membrane, with protons being carried across the membrane as hydrogens on the quinol. In the process called Q cycle, 2 protons are consumed from the matrix, 4 protons are released into the intermembrane space and 2 electrons are passed to cytochrome c. Cytochrome b is a catalytic core subunit containing 2 b-type hemes BL and BH topographically segregated in the quinone reduction (Qi) and quinol oxidation (Q0) sites on opposite sides of the membrane. The chain is Cytochrome b (COB) from Saccharomyces cerevisiae (strain ATCC 204508 / S288c) (Baker's yeast).